We begin with the raw amino-acid sequence, 95 residues long: Aspartyl/glutamyl-tRNA(Asn/Gln) amidotransferase subunit C (95 aa).

This sequence belongs to the GatC family. In terms of assembly, heterotrimer of A, B and C subunits.

The enzyme catalyses L-glutamyl-tRNA(Gln) + L-glutamine + ATP + H2O = L-glutaminyl-tRNA(Gln) + L-glutamate + ADP + phosphate + H(+). It carries out the reaction L-aspartyl-tRNA(Asn) + L-glutamine + ATP + H2O = L-asparaginyl-tRNA(Asn) + L-glutamate + ADP + phosphate + 2 H(+). Allows the formation of correctly charged Asn-tRNA(Asn) or Gln-tRNA(Gln) through the transamidation of misacylated Asp-tRNA(Asn) or Glu-tRNA(Gln) in organisms which lack either or both of asparaginyl-tRNA or glutaminyl-tRNA synthetases. The reaction takes place in the presence of glutamine and ATP through an activated phospho-Asp-tRNA(Asn) or phospho-Glu-tRNA(Gln). The chain is Aspartyl/glutamyl-tRNA(Asn/Gln) amidotransferase subunit C from Chromobacterium violaceum (strain ATCC 12472 / DSM 30191 / JCM 1249 / CCUG 213 / NBRC 12614 / NCIMB 9131 / NCTC 9757 / MK).